The chain runs to 160 residues: Transcription elongation factor GreA (160 aa).

Residues 1–72 are a coiled coil; that stretch reads MAEKTYPMTQ…QIQILETKIR (72 aa).

The protein belongs to the GreA/GreB family.

Necessary for efficient RNA polymerase transcription elongation past template-encoded arresting sites. The arresting sites in DNA have the property of trapping a certain fraction of elongating RNA polymerases that pass through, resulting in locked ternary complexes. Cleavage of the nascent transcript by cleavage factors such as GreA or GreB allows the resumption of elongation from the new 3'terminus. GreA releases sequences of 2 to 3 nucleotides. This Streptococcus agalactiae serotype Ia (strain ATCC 27591 / A909 / CDC SS700) protein is Transcription elongation factor GreA.